Here is a 327-residue protein sequence, read N- to C-terminus: Mycothiol acetyltransferase (327 aa).

N-acetyltransferase domains follow at residues 11-159 and 162-327; these read EPHG…VTLP and VQIR…EGTS. Glu-42 contributes to the 1D-myo-inositol 2-(L-cysteinylamino)-2-deoxy-alpha-D-glucopyranoside binding site. 89–91 is an acetyl-CoA binding site; sequence LVI. 1D-myo-inositol 2-(L-cysteinylamino)-2-deoxy-alpha-D-glucopyranoside-binding residues include Glu-189, Lys-228, and Glu-251. Acetyl-CoA-binding positions include 255–257 and 262–268; these read LGV and QGLGLGR. Tyr-289 contacts 1D-myo-inositol 2-(L-cysteinylamino)-2-deoxy-alpha-D-glucopyranoside. An acetyl-CoA-binding site is contributed by 294-299; it reads NAPAIR.

This sequence belongs to the acetyltransferase family. MshD subfamily. In terms of assembly, monomer.

The catalysed reaction is 1D-myo-inositol 2-(L-cysteinylamino)-2-deoxy-alpha-D-glucopyranoside + acetyl-CoA = mycothiol + CoA + H(+). Catalyzes the transfer of acetyl from acetyl-CoA to desacetylmycothiol (Cys-GlcN-Ins) to form mycothiol. This chain is Mycothiol acetyltransferase, found in Acidothermus cellulolyticus (strain ATCC 43068 / DSM 8971 / 11B).